Here is a 194-residue protein sequence, read N- to C-terminus: Probable GTP-binding protein EngB (194 aa).

The EngB-type G domain maps to 22 to 194; the sequence is GKPEIALVGR…SVWEWITAHM (173 aa). GTP is bound by residues 30 to 37, 57 to 61, 75 to 78, 142 to 145, and 175 to 177; these read GRSNVGKS, GKTQT, DVPG, TKSD, and FSS. Ser37 and Thr59 together coordinate Mg(2+).

The protein belongs to the TRAFAC class TrmE-Era-EngA-EngB-Septin-like GTPase superfamily. EngB GTPase family. The cofactor is Mg(2+).

Functionally, necessary for normal cell division and for the maintenance of normal septation. This Leuconostoc citreum (strain KM20) protein is Probable GTP-binding protein EngB.